Here is a 166-residue protein sequence, read N- to C-terminus: Thiol peroxidase (166 aa).

Positions 18 to 164 constitute a Thioredoxin domain; it reads VKVGDKAPNF…YEKAIEAAKA (147 aa). Catalysis depends on Cys-60, which acts as the Cysteine sulfenic acid (-SOH) intermediate. Cys-60 and Cys-94 form a disulfide bridge.

It belongs to the peroxiredoxin family. Tpx subfamily. Homodimer.

It catalyses the reaction a hydroperoxide + [thioredoxin]-dithiol = an alcohol + [thioredoxin]-disulfide + H2O. In terms of biological role, thiol-specific peroxidase that catalyzes the reduction of hydrogen peroxide and organic hydroperoxides to water and alcohols, respectively. Plays a role in cell protection against oxidative stress by detoxifying peroxides. In Halalkalibacterium halodurans (strain ATCC BAA-125 / DSM 18197 / FERM 7344 / JCM 9153 / C-125) (Bacillus halodurans), this protein is Thiol peroxidase.